The sequence spans 262 residues: Transcription factor bHLH81 (262 aa).

Positions 1-29 (MQPTSVGSSGGGDDGGGRGGGGGLSRSGL) are disordered. The span at 8–25 (SSGGGDDGGGRGGGGGLS) shows a compositional bias: gly residues. The bHLH domain occupies 190–240 (CATHPRSIAERVRRTRISDRIRKLQELVPNMDKQTNTADMLEEAVEYVKVL).

As to quaternary structure, homodimer. Expressed in flowers.

The protein localises to the nucleus. The protein is Transcription factor bHLH81 (BHLH81) of Arabidopsis thaliana (Mouse-ear cress).